The following is a 105-amino-acid chain: uncharacterized protein (105 aa).

This sequence belongs to the asfivirus C122R family.

The protein localises to the virion. This is an uncharacterized protein from African swine fever virus (strain Badajoz 1971 Vero-adapted) (Ba71V).